A 227-amino-acid polypeptide reads, in one-letter code: UPF0758 protein lpg2489 (227 aa).

Positions Arg102 to Val225 constitute an MPN domain. Zn(2+)-binding residues include His173, His175, and Asp186. Residues His173–Asp186 carry the JAMM motif motif.

The protein belongs to the UPF0758 family.

This chain is UPF0758 protein lpg2489, found in Legionella pneumophila subsp. pneumophila (strain Philadelphia 1 / ATCC 33152 / DSM 7513).